Consider the following 99-residue polypeptide: RNA-binding protein HI_1333 (99 aa).

One can recognise a CRM domain in the interval 2–98; that stretch reads TTLSTKQKQF…SEEAKIQLPR (97 aa).

In Haemophilus influenzae (strain ATCC 51907 / DSM 11121 / KW20 / Rd), this protein is RNA-binding protein HI_1333.